A 251-amino-acid chain; its full sequence is Phosphate import ATP-binding protein PstB (251 aa).

The 242-residue stretch at 5–246 (IKIRGVNFFY…PKDKRTEDYI (242 aa)) folds into the ABC transporter domain. 37–44 (GPSGCGKS) is an ATP binding site.

Belongs to the ABC transporter superfamily. Phosphate importer (TC 3.A.1.7) family. As to quaternary structure, the complex is composed of two ATP-binding proteins (PstB), two transmembrane proteins (PstC and PstA) and a solute-binding protein (PstS).

The protein localises to the cell membrane. The enzyme catalyses phosphate(out) + ATP + H2O = ADP + 2 phosphate(in) + H(+). Part of the ABC transporter complex PstSACB involved in phosphate import. Responsible for energy coupling to the transport system. The chain is Phosphate import ATP-binding protein PstB from Dehalococcoides mccartyi (strain ATCC BAA-2266 / KCTC 15142 / 195) (Dehalococcoides ethenogenes (strain 195)).